The primary structure comprises 662 residues: Transmembrane 9 superfamily member 2 (662 aa).

A signal peptide spans 1-28; that stretch reads MSSRPPASPPAQGSRLLLLSLLLLGTVP. Over 29-299 the chain is Lumenal; sequence GPRPGSAFYL…LESMPHTHIQ (271 aa). The helical transmembrane segment at 300-320 threads the bilayer; the sequence is WFSIMNSLVIVLFLSGMVAMI. Over 321-373 the chain is Cytoplasmic; the sequence is MLRTLHKDIARYNQMDSTEDAQEEFGWKLVHGDIFRPPRKGMLLSVFLGSGTQ. Residues 374–394 traverse the membrane as a helical segment; the sequence is ILIMTFVTLFFACLGFLSPAN. Over 395–397 the chain is Lumenal; sequence RGA. Residues 398–418 traverse the membrane as a helical segment; that stretch reads LMTCAVVLWVLLGTPAGYVAA. Residues 419–436 are Cytoplasmic-facing; sequence RFYKSFGGEKWKTNVLLT. The helical transmembrane segment at 437-457 threads the bilayer; that stretch reads SFLCPGIVFADFFIMNLILWG. The Lumenal portion of the chain corresponds to 458 to 465; sequence EGSSAAIP. A helical transmembrane segment spans residues 466–486; the sequence is FGTLVAILALWFCISVPLTFI. At 487 to 521 the chain is on the cytoplasmic side; the sequence is GAYFGFKKNAIEHPVRTNQIPRQIPEQSFYTKPLP. Residues 522–542 form a helical membrane-spanning segment; the sequence is GIIMGGILPFGCIFIQLFFIL. At 543 to 553 the chain is on the lumenal side; the sequence is NSIWSHQMYYM. Residues 554 to 574 form a helical membrane-spanning segment; sequence FGFLFLVFIILVITCSEATIL. The Cytoplasmic portion of the chain corresponds to 575–590; sequence LCYFHLCAEDYHWQWR. Residues 591 to 611 form a helical membrane-spanning segment; that stretch reads SFLTSGFTAVYFLIYAIHYFF. The Lumenal segment spans residues 612–630; sequence SKLQITGTASTILYFGYTM. Residues 631–651 form a helical membrane-spanning segment; it reads IMVLIFFLFTGTIGFFACFWF. Over 652 to 662 the chain is Cytoplasmic; that stretch reads VTKIYSVVKVD.

This sequence belongs to the nonaspanin (TM9SF) (TC 9.A.2) family.

It localises to the endosome membrane. The protein localises to the golgi outpost. It is found in the cytoplasm. The protein resides in the cytoskeleton. Its subcellular location is the microtubule organizing center. In the intracellular compartments, may function as a channel or small molecule transporter. This chain is Transmembrane 9 superfamily member 2 (Tm9sf2), found in Mus musculus (Mouse).